We begin with the raw amino-acid sequence, 515 residues long: Cytochrome P450 monooxygenase nsrP (515 aa).

Residues 20–40 (FGTAAFLAVLLSALAFLSYTP) traverse the membrane as a helical segment. Asn-84, Asn-406, and Asn-411 each carry an N-linked (GlcNAc...) asparagine glycan. Cys-452 is a heme binding site.

This sequence belongs to the cytochrome P450 family. Requires heme as cofactor.

The protein resides in the membrane. It functions in the pathway secondary metabolite biosynthesis. Cytochrome P450 monooxygenase; part of the gene cluster that mediates the biosynthesis of the tetrahydroxanthone dimer neosartorin, which exhibits antibacterial activity. The two different monomeric units appear to be synthesized by the same set of enzymes, among which the Baeyer-Villiger monooxygenase nsrF is the key enzyme for the divergence of the biosynthetic routes. The pathway begins with the synthesis of atrochrysone thioester by the polyketide synthase nsrB. The atrochrysone carboxyl ACP thioesterase nsrC then breaks the thioester bond and releases the atrochrysone carboxylic acid from AacuL. Atrochrysone carboxylic acid is decarboxylated by the decarboxylase nsrE, and oxidized by the anthrone oxygenase nsrD to yield emodin. Emodin is then reduced to emodin hydroquinone by the oxidoreductase nsrR. A-ring reduction by the short chain dehydrogenase nsrJ, dehydration by the scytalone dehydratase-like protein nsrI and probable spontaneous re-oxidation, results in overall deoxygenation to chrysophanol. The Baeyer-Villiger monooxygenase nsrF accepts chrysophanol as a substrate to insert one oxygen atom at two different positions to yield the precursors of both monomric units. NsrF is promiscuous/flexible in interacting with the 2 (non methylated and methylated) aromatic rings of chrysophanol, thus diverging the biosynthetic pathway at this point. After the hydrolysis of the lactones, methylesterification by the methyltransferase nsrG yields respectively moniliphenone and 2,2',6'-trihydroxy-4-methyl-6-methoxya-cyldiphenylmethanone. The next steps are the hydroxylation by the FAD-dependent monooxygenase nsrK, followed by isomerization by the monooxygenase nsrQ. The short chain dehydrogenase/reductase nsrO then catalyzes the C-5 ketoreduction to give the xanthone skeleton of blennolide C and 5-acetylblennolide A. The acetyltransferase nsrL has a strict substrate specificity and uses only blennolide A but not blennolide C to yield 5-acetylblennolide A as the single-acetylated product. In the final step of the biosynthesis, the heterodimerization of the 2 xanthones, blennolide C and 5-acetylblennolide A, is catalyzed by the cytochrome P450 monooxygenase nsrP. NsrP can utilize at least three different xanthones as its substrates to perform the dimerization reaction. This chain is Cytochrome P450 monooxygenase nsrP, found in Aspergillus novofumigatus (strain IBT 16806).